We begin with the raw amino-acid sequence, 73 residues long: Large ribosomal subunit protein bL31 (73 aa).

This sequence belongs to the bacterial ribosomal protein bL31 family. Type A subfamily. In terms of assembly, part of the 50S ribosomal subunit.

Its function is as follows. Binds the 23S rRNA. In Agrobacterium fabrum (strain C58 / ATCC 33970) (Agrobacterium tumefaciens (strain C58)), this protein is Large ribosomal subunit protein bL31.